A 200-amino-acid chain; its full sequence is 3-isopropylmalate dehydratase small subunit (200 aa).

This sequence belongs to the LeuD family. LeuD type 1 subfamily. As to quaternary structure, heterodimer of LeuC and LeuD.

It carries out the reaction (2R,3S)-3-isopropylmalate = (2S)-2-isopropylmalate. The protein operates within amino-acid biosynthesis; L-leucine biosynthesis; L-leucine from 3-methyl-2-oxobutanoate: step 2/4. Its function is as follows. Catalyzes the isomerization between 2-isopropylmalate and 3-isopropylmalate, via the formation of 2-isopropylmaleate. This Proteus mirabilis (strain HI4320) protein is 3-isopropylmalate dehydratase small subunit.